A 164-amino-acid polypeptide reads, in one-letter code: MADTDDIIDYESDDLTEYEDDDEEEEDGESLETSDIDPKSSYKIVESASTHIEDAHSNLKHIGNHISALKRRYTRRISLFEIAGIIAESYNLLQRGRLPLVSEFSNETMKQNMLHVIIQEIEEGSCPIVIEKNGELLSVNDFDKDGLKFHLDYIIKIWKLQKRY.

Residues 1 to 35 (MADTDDIIDYESDDLTEYEDDDEEEEDGESLETSD) show a composition bias toward acidic residues. A disordered region spans residues 1–39 (MADTDDIIDYESDDLTEYEDDDEEEEDGESLETSDIDPK).

Belongs to the poxviridae DNA-directed RNA polymerase 19 kDa subunit family. In terms of assembly, the DNA-dependent RNA polymerase used for intermediate and late genes expression consists of eight subunits Rpo30/OPG66, Rpo7/OPG90, Rpo22/OPG103, Rpo147/OPG105, Rpo18/OPG119, Rpo19/OPG131, Rpo132/OPG151 and Rpo35/OPG156. The same holoenzyme, with the addition of the transcription-specificity factor OPG109, is used for early gene expression.

Its subcellular location is the virion. It catalyses the reaction RNA(n) + a ribonucleoside 5'-triphosphate = RNA(n+1) + diphosphate. Its function is as follows. Part of the DNA-dependent RNA polymerase which catalyzes the transcription of viral DNA into RNA using the four ribonucleoside triphosphates as substrates. Responsible for the transcription of early, intermediate and late genes. DNA-dependent RNA polymerase associates with the early transcription factor (ETF), itself composed of OPG118 and OPG133, thereby allowing the early genes transcription. Late transcription, and probably also intermediate transcription, require newly synthesized RNA polymerase. This chain is DNA-directed RNA polymerase 19 kDa subunit (OPG131), found in Variola virus (isolate Human/India/Ind3/1967) (VARV).